A 167-amino-acid chain; its full sequence is Translationally-controlled tumor protein homolog (167 aa).

Positions methionine 1–isoleucine 167 constitute a TCTP domain.

The protein belongs to the TCTP family.

The protein localises to the cytoplasm. It localises to the cytoskeleton. In terms of biological role, involved in protein synthesis. Involved in microtubule stabilization. In Kluyveromyces lactis (strain ATCC 8585 / CBS 2359 / DSM 70799 / NBRC 1267 / NRRL Y-1140 / WM37) (Yeast), this protein is Translationally-controlled tumor protein homolog.